The following is a 630-amino-acid chain: Forkhead box protein O (630 aa).

The segment at 1-45 is disordered; the sequence is MDGFVQEWSNLPRSDNGLHMDQLVGELPTDGGFEPQTRARSNTWP. Residue T43 is modified to Phosphothreonine; by PKB/AKT1. A DNA-binding region (fork-head) is located at residues 92 to 198; sequence WGNLSYADLI…ETSRYEKRRG (107 aa). A Phosphoserine; by PKB/AKT1 modification is found at S187. The segment at 214–260 is disordered; that stretch reads GLNDATPSPSSSVSEGLDHFPESPLHSGGFQLSPDFRQRASSNASSC. Over residues 218 to 227 the composition is skewed to polar residues; the sequence is ATPSPSSSVS. S255 carries the post-translational modification Phosphoserine; by PKB/AKT1. Residues S258, S259, and S264 each carry the phosphoserine modification. Disordered regions lie at residues 318–379 and 403–432; these read SAAS…QQQQ and TRDGLSPNSVTTTMSPAYPNSEPSSDSLNT. 2 stretches are compositionally biased toward low complexity: residues 332-350 and 367-379; these read QQQQQQQQQQAQQQSQLPQ and QPQAQQQQQQQQQ. Composition is skewed to polar residues over residues 408–417 and 423–432; these read SPNSVTTTMS and SEPSSDSLNT.

Interacts with melt.

It is found in the cytoplasm. It localises to the nucleus. In terms of biological role, transcription factor involved in the regulation of the insulin signaling pathway. Consistently activates both the downstream target Thor\d4EBP and the feedback control target InR. Involved in negative regulation of the cell cycle, modulating cell growth and proliferation. In response to cellular stresses, such as nutrient deprivation or increased levels of reactive oxygen species, foxo is activated and inhibits growth through the action of target genes such as Thor. Foxo activated in the adult fat body can regulate lifespan in adults; an insulin peptide itself may function as one secondary messenger of insulin-regulated aging. Also regulates Lip4, homolog of human acid lipases, thereby acting as a key modulator of lipid metabolism by insulin signaling and integrates insulin responses to glucose and lipid homeostasis. The sequence is that of Forkhead box protein O from Drosophila grimshawi (Hawaiian fruit fly).